A 133-amino-acid polypeptide reads, in one-letter code: Phosphoribosyl-AMP cyclohydrolase (133 aa).

Position 77 (D77) interacts with Mg(2+). C78 lines the Zn(2+) pocket. Mg(2+)-binding residues include D79 and D81. Zn(2+) is bound by residues C95 and C102.

It belongs to the PRA-CH family. Homodimer. Requires Mg(2+) as cofactor. Zn(2+) serves as cofactor.

The protein resides in the cytoplasm. It catalyses the reaction 1-(5-phospho-beta-D-ribosyl)-5'-AMP + H2O = 1-(5-phospho-beta-D-ribosyl)-5-[(5-phospho-beta-D-ribosylamino)methylideneamino]imidazole-4-carboxamide. Its pathway is amino-acid biosynthesis; L-histidine biosynthesis; L-histidine from 5-phospho-alpha-D-ribose 1-diphosphate: step 3/9. In terms of biological role, catalyzes the hydrolysis of the adenine ring of phosphoribosyl-AMP. The sequence is that of Phosphoribosyl-AMP cyclohydrolase from Azotobacter vinelandii (strain DJ / ATCC BAA-1303).